The sequence spans 297 residues: 4-hydroxy-tetrahydrodipicolinate synthase (297 aa).

T47 is a binding site for pyruvate. Catalysis depends on Y136, which acts as the Proton donor/acceptor. The active-site Schiff-base intermediate with substrate is the K165. I206 provides a ligand contact to pyruvate.

It belongs to the DapA family. In terms of assembly, homotetramer; dimer of dimers.

It is found in the cytoplasm. It catalyses the reaction L-aspartate 4-semialdehyde + pyruvate = (2S,4S)-4-hydroxy-2,3,4,5-tetrahydrodipicolinate + H2O + H(+). Its pathway is amino-acid biosynthesis; L-lysine biosynthesis via DAP pathway; (S)-tetrahydrodipicolinate from L-aspartate: step 3/4. Its function is as follows. Catalyzes the condensation of (S)-aspartate-beta-semialdehyde [(S)-ASA] and pyruvate to 4-hydroxy-tetrahydrodipicolinate (HTPA). The chain is 4-hydroxy-tetrahydrodipicolinate synthase from Campylobacter curvus (strain 525.92).